A 360-amino-acid polypeptide reads, in one-letter code: MTQLNIAPASTDTAAASNNNAAAGTKQLARWRVADIVSLYELPFNDLMFQAQQTHREHFDANTVQLSTLLSIKTGGCEEDCAYCPQSVHHDTGLQADKLMPVDEVLAAAKVAKENGATRFCMGAAWRNPKDRHLEPIKDMIRGVKAMGLETCVTLGMLETHQAQGLREAGLDYYNHNLDTSPEFYGQIISTRTYQDRLDTLERVRDAGINVCCGGIVGLGESRRERAGLIAQLANMDPYPESVPINNLVQVEGTPLTGTEAIDPFEFVRTIAIARITMPRAMVRLSAGREQMNEALQAMCFLAGANSIFYGDQLLTTSNPQAEADRKLLERLGIRAEAAQQMPLDQSGCEHGCDKHAAPN.

Residues 1 to 21 form a disordered region; that stretch reads MTQLNIAPASTDTAAASNNNA. The Radical SAM core domain occupies 62 to 289; it reads NTVQLSTLLS…RAMVRLSAGR (228 aa). [4Fe-4S] cluster contacts are provided by Cys-77, Cys-81, and Cys-84. The [2Fe-2S] cluster site is built by Cys-121, Cys-152, Cys-212, and Arg-284.

The protein belongs to the radical SAM superfamily. Biotin synthase family. Homodimer. The cofactor is [4Fe-4S] cluster. It depends on [2Fe-2S] cluster as a cofactor.

The enzyme catalyses (4R,5S)-dethiobiotin + (sulfur carrier)-SH + 2 reduced [2Fe-2S]-[ferredoxin] + 2 S-adenosyl-L-methionine = (sulfur carrier)-H + biotin + 2 5'-deoxyadenosine + 2 L-methionine + 2 oxidized [2Fe-2S]-[ferredoxin]. The protein operates within cofactor biosynthesis; biotin biosynthesis; biotin from 7,8-diaminononanoate: step 2/2. Functionally, catalyzes the conversion of dethiobiotin (DTB) to biotin by the insertion of a sulfur atom into dethiobiotin via a radical-based mechanism. This is Biotin synthase from Paraburkholderia xenovorans (strain LB400).